A 401-amino-acid polypeptide reads, in one-letter code: Probable inactive purple acid phosphatase 14 (401 aa).

The first 30 residues, 1 to 30 (MEETRRRFVISSVLSVSLIYLCLSTCHVSA), serve as a signal peptide directing secretion. N-linked (GlcNAc...) asparagine glycosylation occurs at N79. N197 lines the substrate pocket. N197 contacts Zn(2+). N-linked (GlcNAc...) asparagine glycosylation is present at N246. H256 serves as a coordination point for Zn(2+). Residue N266 is glycosylated (N-linked (GlcNAc...) asparagine). H305 contacts Zn(2+). 305 to 307 (HDH) is a substrate binding site. H307 is a binding site for Fe cation. 2 N-linked (GlcNAc...) asparagine glycosylation sites follow: N371 and N384.

The protein belongs to the metallophosphoesterase superfamily. Purple acid phosphatase family. As to quaternary structure, homodimer. Fe cation is required as a cofactor. Requires Zn(2+) as cofactor. As to expression, specifically expressed in flowers.

It localises to the secreted. The chain is Probable inactive purple acid phosphatase 14 (PAP14) from Arabidopsis thaliana (Mouse-ear cress).